The sequence spans 524 residues: MSFICGLQSAARNHVFFRFNSLSNWRKCNTLASTSRGCHQVQVNHIVNKYQGLGVNQCDRWSFLPGNFHFYSTFNNKRTGGLSSTKSKEIWRITSKCTVWNDAFSRQLLIKEVTAVPSLSVLHPLSPASIRAIRNFHTSPRFQAAPVPLLLMILKPVQKLFAIIVGRGIRKWWQALPPNKKEVVKENIRKNKWKLFLGLSSFGLLFVVFYFTHLEVSPITGRSKLLLLGKEQFRLLSELEYEAWMEEFKNDMLTEKDARYLAVKEVLCHLIECNKDVPGISQINWVIHVVDSPIINAFVLPNGQMFVFTGFLNSVTDIHQLSFLLGHEIAHAVLGHAAEKAGMVHLLDFLGMIFLTMIWAICPRDSLALLCQWIQSKLQEYMFNRPYSRKLEAEADKIGLLLAAKACADIRASSVFWQQMEFVDSLHGQPKMPEWLSTHPSHGNRVEYLDRLIPQALKIREMCNCPPLSNPDPRLLFKLSTKHFLEESEKEDLNITKKQKMDTLPIQKQEQIPLTYIVEKRTGS.

A mitochondrion-targeting transit peptide spans 1-13; it reads MSFICGLQSAARN. The propeptide occupies 14 to 143; that stretch reads HVFFRFNSLS…RNFHTSPRFQ (130 aa). Residues 144–195 are Mitochondrial matrix-facing; it reads AAPVPLLLMILKPVQKLFAIIVGRGIRKWWQALPPNKKEVVKENIRKNKWKL. The segment at 148-167 is cardiolipin-binding; that stretch reads PLLLMILKPVQKLFAIIVGR. Residues 165–195 form a stress-sensor region region; it reads VGRGIRKWWQALPPNKKEVVKENIRKNKWKL. A helical transmembrane segment spans residues 196–216; it reads FLGLSSFGLLFVVFYFTHLEV. His-327 contributes to the Zn(2+) binding site. Residue Glu-328 is part of the active site. Positions 331 and 392 each coordinate Zn(2+). Cys-407 and Cys-465 are oxidised to a cystine.

It belongs to the peptidase M48 family. In terms of assembly, homooligomer. Requires Zn(2+) as cofactor. Post-translationally, may form a redox-dependent disulfide bond. Exists in a semi-oxidized state and is activated by prolonged hypoxia. In terms of processing, autocatalytically cleaved in response to mitochondrial depolarization both at the N-terminus and C-terminus to generate the short active form (S-OMA1). Autocatalytic processing at the C-terminus takes place at residues 447-456. The S-OMA1 form is unstable. OMA1 pre-processing by AFG3L2 may participate in maturation before OMA1 autocatalytic cleavage. Degraded by YMEL1 in response to membrane depolarization. Protein turnover is regulated by prohibitin (PHB and PHB2), which promotes degradation of OMA1 in a cardiolipin-binding manner. In terms of tissue distribution, widely expressed, with strong expression in the heart, skeletal muscle, kidney and liver.

The protein localises to the mitochondrion inner membrane. With respect to regulation, protease activity is activated upon autocatalytic cleavage in response to mitochondrial depolarization. In terms of biological role, metalloprotease that is part of the quality control system in the inner membrane of mitochondria. Activated in response to various mitochondrial stress, leading to the proteolytic cleavage of target proteins, such as OPA1, UQCC3 and DELE1. Involved in the fusion of the mitochondrial inner membranes by mediating cleavage of OPA1 at S1 position, generating the soluble OPA1 (S-OPA1), which cooperates with the membrane form (L-OPA1) to coordinate the fusion of mitochondrial inner membranes. Following stress conditions that induce loss of mitochondrial membrane potential, mediates cleavage of OPA1, leading to excess production of soluble OPA1 (S-OPA1) and negative regulation of mitochondrial fusion. Involved in mitochondrial safeguard in response to transient mitochondrial membrane depolarization (flickering) by catalyzing cleavage of OPA1, leading to excess production of S-OPA1, preventing mitochondrial hyperfusion. Also acts as a regulator of apoptosis: upon BAK and BAX aggregation, mediates cleavage of OPA1, leading to the remodeling of mitochondrial cristae and allowing the release of cytochrome c from mitochondrial cristae. In depolarized mitochondria, may also act as a backup protease for PINK1 by mediating PINK1 cleavage and promoting its subsequent degradation by the proteasome. May also cleave UQCC3 in response to mitochondrial depolarization. Also acts as an activator of the integrated stress response (ISR): in response to mitochondrial stress, mediates cleavage of DELE1 to generate the processed form of DELE1 (S-DELE1), which translocates to the cytosol and activates EIF2AK1/HRI to trigger the ISR. Its role in mitochondrial quality control is essential for regulating lipid metabolism as well as to maintain body temperature and energy expenditure under cold-stress conditions. Binds cardiolipin, possibly regulating its protein turnover. Required for the stability of the respiratory supercomplexes. In Homo sapiens (Human), this protein is Metalloendopeptidase OMA1, mitochondrial.